Reading from the N-terminus, the 251-residue chain is Hydroxyacylglutathione hydrolase (251 aa).

Positions 53, 55, 57, 58, 110, 127, and 165 each coordinate Zn(2+).

The protein belongs to the metallo-beta-lactamase superfamily. Glyoxalase II family. Monomer. It depends on Zn(2+) as a cofactor.

The enzyme catalyses an S-(2-hydroxyacyl)glutathione + H2O = a 2-hydroxy carboxylate + glutathione + H(+). It participates in secondary metabolite metabolism; methylglyoxal degradation; (R)-lactate from methylglyoxal: step 2/2. Its function is as follows. Thiolesterase that catalyzes the hydrolysis of S-D-lactoyl-glutathione to form glutathione and D-lactic acid. This Escherichia coli O9:H4 (strain HS) protein is Hydroxyacylglutathione hydrolase.